A 156-amino-acid polypeptide reads, in one-letter code: Large ribosomal subunit protein uL11 (156 aa).

The tract at residues 1–20 (MAQSVKTMVEGGKATTGPPI) is disordered.

The protein belongs to the universal ribosomal protein uL11 family. Part of the ribosomal stalk of the 50S ribosomal subunit. Interacts with L10 and the large rRNA to form the base of the stalk. L10 forms an elongated spine to which L12 dimers bind in a sequential fashion forming a multimeric L10(L12)X complex.

Forms part of the ribosomal stalk which helps the ribosome interact with GTP-bound translation factors. This is Large ribosomal subunit protein uL11 from Thermoplasma acidophilum (strain ATCC 25905 / DSM 1728 / JCM 9062 / NBRC 15155 / AMRC-C165).